The chain runs to 211 residues: Uracil phosphoribosyltransferase (211 aa).

Lys-30–Arg-34 provides a ligand contact to GTP. 5-phospho-alpha-D-ribose 1-diphosphate is bound by residues Arg-79, Arg-104, and Asp-133 to Thr-141. Residues Ile-197 and Gly-202–Ala-204 each bind uracil. Asp-203 is a binding site for 5-phospho-alpha-D-ribose 1-diphosphate.

The protein belongs to the UPRTase family. Mg(2+) is required as a cofactor.

The catalysed reaction is UMP + diphosphate = 5-phospho-alpha-D-ribose 1-diphosphate + uracil. The protein operates within pyrimidine metabolism; UMP biosynthesis via salvage pathway; UMP from uracil: step 1/1. Its activity is regulated as follows. Allosterically activated by GTP. Its function is as follows. Catalyzes the conversion of uracil and 5-phospho-alpha-D-ribose 1-diphosphate (PRPP) to UMP and diphosphate. This chain is Uracil phosphoribosyltransferase, found in Pyrobaculum islandicum (strain DSM 4184 / JCM 9189 / GEO3).